A 244-amino-acid polypeptide reads, in one-letter code: Large ribosomal subunit protein bL25 (244 aa).

Residues alanine 197 to glutamate 244 are disordered. Residues alanine 204–glutamate 215 are compositionally biased toward low complexity.

It belongs to the bacterial ribosomal protein bL25 family. CTC subfamily. As to quaternary structure, part of the 50S ribosomal subunit; part of the 5S rRNA/L5/L18/L25 subcomplex. Contacts the 5S rRNA. Binds to the 5S rRNA independently of L5 and L18.

Functionally, this is one of the proteins that binds to the 5S RNA in the ribosome where it forms part of the central protuberance. The polypeptide is Large ribosomal subunit protein bL25 (Coxiella burnetii (strain CbuK_Q154) (Coxiella burnetii (strain Q154))).